The primary structure comprises 302 residues: Quinolinate synthase (302 aa).

The iminosuccinate site is built by histidine 24 and serine 41. Residue cysteine 86 coordinates [4Fe-4S] cluster. Residues 112–114 (YVN) and serine 129 contribute to the iminosuccinate site. Cysteine 171 lines the [4Fe-4S] cluster pocket. Residues 197–199 (HPE) and threonine 214 contribute to the iminosuccinate site. Cysteine 259 contributes to the [4Fe-4S] cluster binding site.

The protein belongs to the quinolinate synthase family. Type 2 subfamily. The cofactor is [4Fe-4S] cluster.

It is found in the cytoplasm. It carries out the reaction iminosuccinate + dihydroxyacetone phosphate = quinolinate + phosphate + 2 H2O + H(+). It functions in the pathway cofactor biosynthesis; NAD(+) biosynthesis; quinolinate from iminoaspartate: step 1/1. Functionally, catalyzes the condensation of iminoaspartate with dihydroxyacetone phosphate to form quinolinate. The sequence is that of Quinolinate synthase from Dehalococcoides mccartyi (strain CBDB1).